The sequence spans 316 residues: Phosphatidylinositol mannoside acyltransferase (316 aa).

Residue histidine 137 is the Proton acceptor of the active site. Histidine 137 and arginine 175 together coordinate hexadecanoyl-CoA. Glutamate 211 is an active-site residue. Hexadecanoyl-CoA is bound at residue glutamate 240.

This sequence belongs to the LpxL/LpxM/LpxP family.

Its subcellular location is the cell inner membrane. The catalysed reaction is a 2,6-O-bis(alpha-D-mannopyranosyl)-1-phosphatidyl-1D-myo-inositol + an acyl-CoA = a 2-O-(alpha-D-mannosyl)-6-O-(6-O-acyl-alpha-D-mannosyl)-1-phosphatidyl-1D-myo-inositol + CoA. It carries out the reaction a 1,2-diacyl-sn-glycero-3-phospho-[alpha-D-mannopyranosyl-(1&lt;-&gt;6)-D-myo-inositol] + an acyl-CoA = a 1,2-diacyl-sn-glycero-3-phospho-[alpha-D-6-acyl-mannopyranosyl-(1&lt;-&gt;6)-D-myo-inositol] + CoA. The protein operates within phospholipid metabolism; phosphatidylinositol metabolism. Its function is as follows. Catalyzes the transfer of a palmitoyl moiety from palmitoyl-CoA to the 6-position of the mannose ring linked to the 2-position of myo-inositol in phosphatidyl-myo-inositol monomannoside (PIM1) or dimannoside (PIM2). Essential for growth and survival in axenic cultures and during macrophage infection and in a mouse model of infection. This Mycobacterium tuberculosis (strain ATCC 25618 / H37Rv) protein is Phosphatidylinositol mannoside acyltransferase.